The chain runs to 339 residues: MRVYYDRDADLNLIKGKKVVIVGYGSQGHAHALNLRDSGVKDIVVALRPGSASAKKAEGEGFKVMTPAEAAKWGDVVMMLTPDELQADIYRESLHDNMKQGAALLFAHGLNVHFNLIEPRKDLDVLMIAPKGPGHTVRSEYQRGGGVPTLIAIAQDASGNAHDLGLSYASANGGGRAGIIETTFKEECETDLFGEQVVLCGGLVELIRAGFETLVEAGYAPEMAYFECLHEVKLIVDLIYEGGIANMNYSISNTAEYGEYVTGPRIITPETKAEMKRVLTDIQTGKFTRDWMLENKVNQASFKATRARHNAHQIEAVGEKLREMMPWIKAKALVDKSKN.

Positions 1–182 constitute a KARI N-terminal Rossmann domain; that stretch reads MRVYYDRDAD…GGGRAGIIET (182 aa). NADP(+) contacts are provided by residues 24–27, R48, S51, S53, and 83–86; these read YGSQ and DELQ. Residue H108 is part of the active site. G134 lines the NADP(+) pocket. Residues 183 to 328 form the KARI C-terminal knotted domain; it reads TFKEECETDL…EKLREMMPWI (146 aa). The Mg(2+) site is built by D191, E195, E227, and E231. S252 is a substrate binding site.

This sequence belongs to the ketol-acid reductoisomerase family. Mg(2+) is required as a cofactor.

It carries out the reaction (2R)-2,3-dihydroxy-3-methylbutanoate + NADP(+) = (2S)-2-acetolactate + NADPH + H(+). The enzyme catalyses (2R,3R)-2,3-dihydroxy-3-methylpentanoate + NADP(+) = (S)-2-ethyl-2-hydroxy-3-oxobutanoate + NADPH + H(+). Its pathway is amino-acid biosynthesis; L-isoleucine biosynthesis; L-isoleucine from 2-oxobutanoate: step 2/4. It functions in the pathway amino-acid biosynthesis; L-valine biosynthesis; L-valine from pyruvate: step 2/4. Functionally, involved in the biosynthesis of branched-chain amino acids (BCAA). Catalyzes an alkyl-migration followed by a ketol-acid reduction of (S)-2-acetolactate (S2AL) to yield (R)-2,3-dihydroxy-isovalerate. In the isomerase reaction, S2AL is rearranged via a Mg-dependent methyl migration to produce 3-hydroxy-3-methyl-2-ketobutyrate (HMKB). In the reductase reaction, this 2-ketoacid undergoes a metal-dependent reduction by NADPH to yield (R)-2,3-dihydroxy-isovalerate. The protein is Ketol-acid reductoisomerase (NADP(+)) of Azorhizobium caulinodans (strain ATCC 43989 / DSM 5975 / JCM 20966 / LMG 6465 / NBRC 14845 / NCIMB 13405 / ORS 571).